The following is a 31-amino-acid chain: Cycloviolacin-O19 (31 aa).

Residues 1-31 (GTLPCGESCVWIPCISSVVGCSCKSKVCYKD) constitute a cross-link (cyclopeptide (Gly-Asp)). 3 disulfides stabilise this stretch: C5–C21, C9–C23, and C14–C28.

This is a cyclic peptide. Expressed in petioles and runners but not in leaves, petals and roots (at protein level).

Functionally, probably participates in a plant defense mechanism. The protein is Cycloviolacin-O19 of Viola odorata (Sweet violet).